Reading from the N-terminus, the 897-residue chain is N-terminal acetyltransferase A complex auxiliary subunit NAA15 (897 aa).

TPR repeat units lie at residues 77–110 (HVCW…DPDN), 111–144 (LEIL…KPNH), 189–222 (TEMI…IVDK), 223–256 (LSYK…NPDN), 298–331 (SSAV…KGVP), 380–413 (LWTL…TPTV), and 488–523 (QCMW…YADI). Disordered regions lie at residues 578-640 (KSTA…DPHG) and 863-897 (SRKS…SVAT). Residues 602–617 (KAEARAKKEAESKSEE) are compositionally biased toward basic and acidic residues. The segment covering 863–872 (SRKSNENGDT) has biased composition (polar residues).

In terms of assembly, part of the NatA complex. Associates with ribosomes. Interacts with NAA10. Expressed in leaves, roots, shoots and flowers.

Auxiliary subunit of the NatA N-alpha-acetyltransferase complex. Required for male gametocyte development, embryogenesis, suspensor development and the formation of the quiescent center (QC) in the root meristem. Involved in plant immunity through the regulation of SNC1 stability. Required for embryo development. The protein is N-terminal acetyltransferase A complex auxiliary subunit NAA15 of Arabidopsis thaliana (Mouse-ear cress).